Consider the following 518-residue polypeptide: Zinc finger protein 449 (518 aa).

The SCAN box domain occupies 30 to 112 (RQRFRQFQYR…SLIEDLQREL (83 aa)). Polar residues predominate over residues 292 to 304 (NPTLGETPENSNL). Positions 292–325 (NPTLGETPENSNLEEPLNPKPHKKKSPGEKPHRC) are disordered. 7 C2H2-type zinc fingers span residues 323-345 (HRCP…QRIH), 351-373 (HKCP…QRLH), 379-401 (YECT…QRTH), 407-429 (YKCL…LKTH), 435-457 (HRCH…QRTH), 463-485 (FKCN…LRIH), and 491-513 (YKCT…QVTH).

The protein belongs to the krueppel C2H2-type zinc-finger protein family.

It localises to the nucleus. Its function is as follows. May be involved in transcriptional regulation. This is Zinc finger protein 449 (ZNF449) from Gorilla gorilla gorilla (Western lowland gorilla).